Consider the following 186-residue polypeptide: Ribosome-recycling factor (186 aa).

This sequence belongs to the RRF family.

Its subcellular location is the cytoplasm. Functionally, responsible for the release of ribosomes from messenger RNA at the termination of protein biosynthesis. May increase the efficiency of translation by recycling ribosomes from one round of translation to another. The protein is Ribosome-recycling factor of Cupriavidus taiwanensis (strain DSM 17343 / BCRC 17206 / CCUG 44338 / CIP 107171 / LMG 19424 / R1) (Ralstonia taiwanensis (strain LMG 19424)).